The chain runs to 138 residues: Nucleoside diphosphate kinase (138 aa).

Lysine 9, phenylalanine 57, arginine 85, threonine 91, arginine 102, and asparagine 112 together coordinate ATP. The active-site Pros-phosphohistidine intermediate is the histidine 115.

It belongs to the NDK family. Homotetramer. Requires Mg(2+) as cofactor.

It is found in the cytoplasm. The enzyme catalyses a 2'-deoxyribonucleoside 5'-diphosphate + ATP = a 2'-deoxyribonucleoside 5'-triphosphate + ADP. The catalysed reaction is a ribonucleoside 5'-diphosphate + ATP = a ribonucleoside 5'-triphosphate + ADP. Its function is as follows. Major role in the synthesis of nucleoside triphosphates other than ATP. The ATP gamma phosphate is transferred to the NDP beta phosphate via a ping-pong mechanism, using a phosphorylated active-site intermediate. The polypeptide is Nucleoside diphosphate kinase (Exiguobacterium sibiricum (strain DSM 17290 / CCUG 55495 / CIP 109462 / JCM 13490 / 255-15)).